Consider the following 377-residue polypeptide: Chaperone protein DnaJ (377 aa).

The 66-residue stretch at 5–70 (DFYEVLGVER…SKRAAYDQYG (66 aa)) folds into the J domain. Residues 136–214 (GTTVTIRVPT…CHGQGRVEEQ (79 aa)) form a CR-type zinc finger. Zn(2+) contacts are provided by Cys-149, Cys-152, Cys-166, Cys-169, Cys-188, Cys-191, Cys-202, and Cys-205. 4 CXXCXGXG motif repeats span residues 149-156 (CKTCNGSG), 166-173 (CTTCGGIG), 188-195 (CPRCHGTG), and 202-209 (CGSCHGQG).

It belongs to the DnaJ family. In terms of assembly, homodimer. Zn(2+) is required as a cofactor.

Its subcellular location is the cytoplasm. In terms of biological role, participates actively in the response to hyperosmotic and heat shock by preventing the aggregation of stress-denatured proteins and by disaggregating proteins, also in an autonomous, DnaK-independent fashion. Unfolded proteins bind initially to DnaJ; upon interaction with the DnaJ-bound protein, DnaK hydrolyzes its bound ATP, resulting in the formation of a stable complex. GrpE releases ADP from DnaK; ATP binding to DnaK triggers the release of the substrate protein, thus completing the reaction cycle. Several rounds of ATP-dependent interactions between DnaJ, DnaK and GrpE are required for fully efficient folding. Also involved, together with DnaK and GrpE, in the DNA replication of plasmids through activation of initiation proteins. The chain is Chaperone protein DnaJ from Pseudomonas paraeruginosa (strain DSM 24068 / PA7) (Pseudomonas aeruginosa (strain PA7)).